A 51-amino-acid polypeptide reads, in one-letter code: Large ribosomal subunit protein bL33 (51 aa).

Positions 1-21 are disordered; sequence MRDKIKLESGAGTGHFYTTTK.

This sequence belongs to the bacterial ribosomal protein bL33 family.

This is Large ribosomal subunit protein bL33 from Neisseria gonorrhoeae (strain ATCC 700825 / FA 1090).